Reading from the N-terminus, the 153-residue chain is Transcriptional repressor NrdR (153 aa).

Residues 3–34 (CPSCHHSGTRVLESRPVEEGRSIRRRRECEQC) fold into a zinc finger. One can recognise an ATP-cone domain in the interval 49–139 (LIVVKKEGTR…VYRQFKDINV (91 aa)).

It belongs to the NrdR family. The cofactor is Zn(2+).

Negatively regulates transcription of bacterial ribonucleotide reductase nrd genes and operons by binding to NrdR-boxes. This Geobacillus kaustophilus (strain HTA426) protein is Transcriptional repressor NrdR.